A 521-amino-acid polypeptide reads, in one-letter code: Probable methylmalonate-semialdehyde/malonate-semialdehyde dehydrogenase [acylating], mitochondrial (521 aa).

NAD(+)-binding residues include F172, K196, E199, R200, and S249. C304 acts as the Nucleophile in catalysis. E404 is a binding site for NAD(+).

This sequence belongs to the aldehyde dehydrogenase family. As to quaternary structure, homotetramer.

It localises to the mitochondrion. It carries out the reaction 2-methyl-3-oxopropanoate + NAD(+) + CoA + H2O = propanoyl-CoA + hydrogencarbonate + NADH + H(+). The enzyme catalyses 3-oxopropanoate + NAD(+) + CoA + H2O = hydrogencarbonate + acetyl-CoA + NADH + H(+). Functionally, probable malonate and methylmalonate semialdehyde dehydrogenase involved in the catabolism of valine, thymine, and compounds catabolized by way of beta-alanine, including uracil and cytidine. The chain is Probable methylmalonate-semialdehyde/malonate-semialdehyde dehydrogenase [acylating], mitochondrial from Aedes aegypti (Yellowfever mosquito).